The primary structure comprises 485 residues: Glutamyl-tRNA(Gln) amidotransferase subunit A (485 aa).

Active-site charge relay system residues include Lys-80 and Ser-155. Catalysis depends on Ser-179, which acts as the Acyl-ester intermediate.

The protein belongs to the amidase family. GatA subfamily. As to quaternary structure, heterotrimer of A, B and C subunits.

The catalysed reaction is L-glutamyl-tRNA(Gln) + L-glutamine + ATP + H2O = L-glutaminyl-tRNA(Gln) + L-glutamate + ADP + phosphate + H(+). In terms of biological role, allows the formation of correctly charged Gln-tRNA(Gln) through the transamidation of misacylated Glu-tRNA(Gln) in organisms which lack glutaminyl-tRNA synthetase. The reaction takes place in the presence of glutamine and ATP through an activated gamma-phospho-Glu-tRNA(Gln). This chain is Glutamyl-tRNA(Gln) amidotransferase subunit A, found in Leptospira borgpetersenii serovar Hardjo-bovis (strain L550).